Here is a 143-residue protein sequence, read N- to C-terminus: Large ribosomal subunit protein uL11 (143 aa).

The protein belongs to the universal ribosomal protein uL11 family. As to quaternary structure, part of the ribosomal stalk of the 50S ribosomal subunit. Interacts with L10 and the large rRNA to form the base of the stalk. L10 forms an elongated spine to which L12 dimers bind in a sequential fashion forming a multimeric L10(L12)X complex. Post-translationally, one or more lysine residues are methylated.

Its function is as follows. Forms part of the ribosomal stalk which helps the ribosome interact with GTP-bound translation factors. The polypeptide is Large ribosomal subunit protein uL11 (Caulobacter vibrioides (strain ATCC 19089 / CIP 103742 / CB 15) (Caulobacter crescentus)).